A 451-amino-acid polypeptide reads, in one-letter code: MPGMMEKGPELLGKSRSANGGAKSPAGGGGSSANGGLHFSEPESGCSSDDEHGDVGMRVGAEYQARIPEFDPGATKYTDKDNGGMLVWSPYHSIPDAKLDEYIAIAKEKHGYNVEQALGMLFWHKHNIEKSLADLPNFTPFPDEWTVEDKVLFEQAFSFHGKSFHRIQQMLPDKTIASLVKYYYSWKKTRSRTSLMDRQARKLANRHNQGDSDDDVEEAHPMDGNDSDYDPKKEAKREGNADQPVQTSKIGLGRREYQSLQHRHHSQRSKCRPPKGMYLTQEDVVAVSCSPNAANTILRQLDMELISLKRQVQNAKQVNSALKQKMEGGIEEFKPPEAQTPQAPRTLGPSPPAPSSTPTPTVPIATLNQPPPLLRPTLPAAPALHRQPPPLQQQARFIQPRPTLNQPPPPLIRPANSMPPRLNPRPVLTTVGGQQPPSLIGIQTDSQPSLH.

Residues 1 to 55 (MPGMMEKGPELLGKSRSANGGAKSPAGGGGSSANGGLHFSEPESGCSSDDEHGDV) are disordered. The ELM2 domain occupies 55–139 (VGMRVGAEYQ…KSLADLPNFT (85 aa)). K76 is covalently cross-linked (Glycyl lysine isopeptide (Lys-Gly) (interchain with G-Cter in SUMO2)). The SANT domain occupies 140–191 (PFPDEWTVEDKVLFEQAFSFHGKSFHRIQQMLPDKTIASLVKYYYSWKKTRS). The disordered stretch occupies residues 204-275 (ANRHNQGDSD…SQRSKCRPPK (72 aa)). 2 positions are modified to phosphoserine: S212 and S227. A compositionally biased stretch (basic and acidic residues) spans 218 to 240 (EAHPMDGNDSDYDPKKEAKREGN). Residue K249 forms a Glycyl lysine isopeptide (Lys-Gly) (interchain with G-Cter in SUMO2) linkage. Over residues 261–273 (QHRHHSQRSKCRP) the composition is skewed to basic residues. The stretch at 293–329 (AANTILRQLDMELISLKRQVQNAKQVNSALKQKMEGG) forms a coiled coil. Positions 333–451 (FKPPEAQTPQ…IQTDSQPSLH (119 aa)) are disordered. The segment covering 349–361 (PSPPAPSSTPTPT) has biased composition (pro residues). Positions 375 to 384 (RPTLPAAPAL) are enriched in low complexity. R401 and R413 each carry asymmetric dimethylarginine. The segment covering 431 to 451 (VGGQQPPSLIGIQTDSQPSLH) has biased composition (polar residues).

It belongs to the CoREST family.

The protein resides in the nucleus. In terms of biological role, may act as a component of a corepressor complex that represses transcription. The chain is REST corepressor 3 (Rcor3) from Mus musculus (Mouse).